The sequence spans 186 residues: Adenine phosphoribosyltransferase (186 aa).

132-136 contacts AMP; it reads ATGGS.

The protein belongs to the purine/pyrimidine phosphoribosyltransferase family. Homodimer. The cofactor is Mg(2+).

Its subcellular location is the cytoplasm. It is found in the nucleus. The catalysed reaction is AMP + diphosphate = 5-phospho-alpha-D-ribose 1-diphosphate + adenine. The protein operates within purine metabolism; AMP biosynthesis via salvage pathway; AMP from adenine: step 1/1. Functionally, catalyzes a salvage reaction resulting in the formation of AMP, that is energically less costly than de novo synthesis. This chain is Adenine phosphoribosyltransferase (APT1), found in Debaryomyces hansenii (strain ATCC 36239 / CBS 767 / BCRC 21394 / JCM 1990 / NBRC 0083 / IGC 2968) (Yeast).